A 223-amino-acid chain; its full sequence is Ribose-5-phosphate isomerase A (223 aa).

Residues 26–29 (TGST), 82–85 (DGAD), and 95–98 (KGGG) contribute to the substrate site. The active-site Proton acceptor is the Glu-104. Residue Lys-122 coordinates substrate.

The protein belongs to the ribose 5-phosphate isomerase family. Homodimer.

It carries out the reaction aldehydo-D-ribose 5-phosphate = D-ribulose 5-phosphate. The protein operates within carbohydrate degradation; pentose phosphate pathway; D-ribose 5-phosphate from D-ribulose 5-phosphate (non-oxidative stage): step 1/1. In terms of biological role, catalyzes the reversible conversion of ribose-5-phosphate to ribulose 5-phosphate. This is Ribose-5-phosphate isomerase A from Streptococcus agalactiae serotype III (strain NEM316).